Reading from the N-terminus, the 359-residue chain is Src kinase-associated phosphoprotein 2 (359 aa).

Phosphoserine occurs at positions 5, 6, and 9. Positions 67–88 (GDAEDGEEYDDPFAGPPDTISL) are disordered. Tyr-75 is modified (phosphotyrosine). 2 positions are modified to phosphoserine: Ser-87 and Ser-90. In terms of domain architecture, PH spans 116-219 (FVLKAGYLEK…WVQQLKFVLQ (104 aa)). Phosphotyrosine occurs at positions 151 and 197. Ser-223 is modified (phosphoserine). A Phosphotyrosine modification is found at Tyr-261. The residue at position 286 (Ser-286) is a Phosphoserine. The 62-residue stretch at 297–358 (DYANFYQGLW…PKAYIMEMYD (62 aa)) folds into the SH3 domain.

This sequence belongs to the SKAP family. Interacts with FYB1, which is required for SKAP2 protein stability. Interacts with PTPNS1. Part of a complex consisting of SKAP2, FYB1 and PTPNS1. Part of a complex consisting of SKAP2, FYB1 and LILRB3. Interacts with LAT, GRB2, PTK2B, and PRAM1. May interact with actin. May interact with FYN, HCK and LYN. Interacts with FASLG.

The protein resides in the cytoplasm. May be involved in B-cell and macrophage adhesion processes. In B-cells, may act by coupling the B-cell receptor (BCR) to integrin activation. May play a role in src signaling pathway. The sequence is that of Src kinase-associated phosphoprotein 2 (SKAP2) from Pongo abelii (Sumatran orangutan).